The following is a 231-amino-acid chain: Cytochrome c oxidase subunit 2 (231 aa).

Over 1-14 the chain is Mitochondrial intermembrane; that stretch reads MATPAQLGLQNATS. A helical membrane pass occupies residues 15-45; it reads PIMEELIAFHDHALMIIFLISSLVLYIISLM. The Mitochondrial matrix segment spans residues 46-59; the sequence is LTTKLTHTSTMNAQ. A helical transmembrane segment spans residues 60 to 87; that stretch reads EIEMIWTILPAIILIMIALPSLRILYMT. Topologically, residues 88–231 are mitochondrial intermembrane; sequence DEFNKPYLTL…WASYLYIVSL (144 aa). H161, C196, E198, C200, H204, and M207 together coordinate Cu cation. E198 provides a ligand contact to Mg(2+).

The protein belongs to the cytochrome c oxidase subunit 2 family. Component of the cytochrome c oxidase (complex IV, CIV), a multisubunit enzyme composed of 14 subunits. The complex is composed of a catalytic core of 3 subunits MT-CO1, MT-CO2 and MT-CO3, encoded in the mitochondrial DNA, and 11 supernumerary subunits COX4I, COX5A, COX5B, COX6A, COX6B, COX6C, COX7A, COX7B, COX7C, COX8 and NDUFA4, which are encoded in the nuclear genome. The complex exists as a monomer or a dimer and forms supercomplexes (SCs) in the inner mitochondrial membrane with NADH-ubiquinone oxidoreductase (complex I, CI) and ubiquinol-cytochrome c oxidoreductase (cytochrome b-c1 complex, complex III, CIII), resulting in different assemblies (supercomplex SCI(1)III(2)IV(1) and megacomplex MCI(2)III(2)IV(2)). Found in a complex with TMEM177, COA6, COX18, COX20, SCO1 and SCO2. Interacts with TMEM177 in a COX20-dependent manner. Interacts with COX20. Interacts with COX16. The cofactor is Cu cation.

The protein resides in the mitochondrion inner membrane. It catalyses the reaction 4 Fe(II)-[cytochrome c] + O2 + 8 H(+)(in) = 4 Fe(III)-[cytochrome c] + 2 H2O + 4 H(+)(out). In terms of biological role, component of the cytochrome c oxidase, the last enzyme in the mitochondrial electron transport chain which drives oxidative phosphorylation. The respiratory chain contains 3 multisubunit complexes succinate dehydrogenase (complex II, CII), ubiquinol-cytochrome c oxidoreductase (cytochrome b-c1 complex, complex III, CIII) and cytochrome c oxidase (complex IV, CIV), that cooperate to transfer electrons derived from NADH and succinate to molecular oxygen, creating an electrochemical gradient over the inner membrane that drives transmembrane transport and the ATP synthase. Cytochrome c oxidase is the component of the respiratory chain that catalyzes the reduction of oxygen to water. Electrons originating from reduced cytochrome c in the intermembrane space (IMS) are transferred via the dinuclear copper A center (CU(A)) of subunit 2 and heme A of subunit 1 to the active site in subunit 1, a binuclear center (BNC) formed by heme A3 and copper B (CU(B)). The BNC reduces molecular oxygen to 2 water molecules using 4 electrons from cytochrome c in the IMS and 4 protons from the mitochondrial matrix. This is Cytochrome c oxidase subunit 2 (MT-CO2) from Aotus nigriceps (Black-headed night monkey).